The sequence spans 677 residues: Methionine--tRNA ligase (677 aa).

The 'HIGH' region motif lies at 15-25 (PYANGSIHLGH). Zn(2+) contacts are provided by Cys146, Cys149, Cys159, and Cys162. Residues 333 to 337 (KMSKS) carry the 'KMSKS' region motif. Lys336 lines the ATP pocket. Positions 575-677 (DFAKVDLRVA…DGAKPGQQVK (103 aa)) constitute a tRNA-binding domain.

Belongs to the class-I aminoacyl-tRNA synthetase family. MetG type 1 subfamily. Homodimer. It depends on Zn(2+) as a cofactor.

It localises to the cytoplasm. It carries out the reaction tRNA(Met) + L-methionine + ATP = L-methionyl-tRNA(Met) + AMP + diphosphate. Is required not only for elongation of protein synthesis but also for the initiation of all mRNA translation through initiator tRNA(fMet) aminoacylation. The polypeptide is Methionine--tRNA ligase (Klebsiella pneumoniae (strain 342)).